We begin with the raw amino-acid sequence, 699 residues long: Elongation factor G (699 aa).

One can recognise a tr-type G domain in the interval 8 to 283 (EHIRNIGICA…AVVYFLPSPI (276 aa)). GTP contacts are provided by residues 17-24 (AHIDAGKT), 81-85 (DTPGH), and 135-138 (NKMD).

This sequence belongs to the TRAFAC class translation factor GTPase superfamily. Classic translation factor GTPase family. EF-G/EF-2 subfamily.

It is found in the cytoplasm. In terms of biological role, catalyzes the GTP-dependent ribosomal translocation step during translation elongation. During this step, the ribosome changes from the pre-translocational (PRE) to the post-translocational (POST) state as the newly formed A-site-bound peptidyl-tRNA and P-site-bound deacylated tRNA move to the P and E sites, respectively. Catalyzes the coordinated movement of the two tRNA molecules, the mRNA and conformational changes in the ribosome. The polypeptide is Elongation factor G (Rickettsia akari (strain Hartford)).